The chain runs to 1090 residues: MTAASTSKWGLITNVVNSIVGVSVLTMPFCFKQCGIVLGALLLVFCSWMTHQSCMFLVKSASLSKRRTYAGLAFHAYGKAGKMLVETSMIGLMLGSCITFYVVIGDLGSNFFAPLLGLQVTRTVRVFLLFAVSLFIVLPLSLQRNMMASIQSFSAMALLFYTVFMFVIVLSSLKHGLFSGQWLRQVSYIRWEGVFRCVPIFGMSFACQSQVLPTYDSLDEPSVKTMSSIFASSLNVVTAFYVMVGFFGYVSFTDATTGNVLIHFPSNPVTEMIRVGFVMSVAVGFPMMILPCRQALNTLLFEQQQKDGTFAAGGYMPPLRFKVLTLSVVFGTMVGGVMIPNVETILGFTGATMGSLICFICPALIYKKAHKNAPSAQVVLWVGLGILVVSTLTTLSVTEEAPLDLTQEARSGHRGDAEGAMKVEAARLSVQDPVVVVAEDSQEKLKPAEDKEVLEQAQIKGPVDVPGGEAPKEKQEAAQLDRPGQGIAVPMGEAHRHEPPIPHDKVVVDEGQDQEGPEEKKPPPRLPDEGDPAGRGQGAPPLPESEKEKQEPERGGEGKRPGQVLAVGETEHPQKVPEANGQPPVQPRKEDSRPGNRDPQPAAQARDSVELKALAADDGREPAQKAGGALWKPVESAAESDAGGKAGLPVQRPEAAEQREKKEAEQQGGDQAGSKLEAEIKKLVAEAGRAEMLDHAVLLQVIQEQQVQQKRLLDQQEKLLAVIEEQHKEIRQQRQEGEEDKPKPADVQPEPGVAVLRGQEEEAEHAGETLGDDPSQPLQPVLGAPRGRPAPSQDMGQHLPGEVKVLPGRDLADLPAGGSETEPQGAPIDLREDPKAAIKAAGAGKELVPGDLEAVHKAAPPEVPKSPEKQVAKAVAGQRQDVFGEGSEERKETGKEAMAPGADTQKEAVQPLVGAEAKDTKSRQSGPTKAPVQTQAKFHPEPQAIFDTGQGSHPEVRSEAPRAVHIPPEEQHKGKGGAAIQEAKQRPDPNSGPKLAVPAGQKPENAKPNRDLKVQAGSDLRRRRRDLASHPEQELAPKDGVIISFNSLPNVQVNDLRSALDTQLRQAAGAALQVVHSRQIKQLSGDLEEA.

The next 10 membrane-spanning stretches (helical) occupy residues 9-31 (WGLI…PFCF), 36-58 (IVLG…MFLV), 84-104 (LVET…YVVI), 123-143 (TVRV…LSLQ), 153-173 (FSAM…LSSL), 229-249 (IFAS…FFGY), 272-292 (MIRV…ILPC), 323-343 (VLTL…PNVE), 345-365 (ILGF…PALI), and 378-398 (VVLW…LSVT). Residue serine 441 is modified to Phosphoserine. Basic and acidic residues-rich tracts occupy residues 441 to 454 (SQEK…KEVL), 493 to 508 (EAHR…KVVV), 517 to 528 (PEEKKPPPRLPD), 544 to 560 (ESEK…EGKR), 587 to 596 (PRKEDSRPGN), and 607 to 623 (DSVE…REPA). 3 disordered regions span residues 441–675 (SQEK…AGSK), 729–831 (EIRQ…IDLR), and 857–1037 (KAAP…ELAP). 2 positions are modified to phosphoserine: serine 608 and serine 636. 3 stretches are compositionally biased toward basic and acidic residues: residues 654-665 (EAAEQREKKEAE), 729-744 (EIRQ…KPKP), and 758-767 (GQEEEAEHAG). Threonine 769 carries the phosphothreonine modification. Serine 887 carries the phosphoserine modification. Polar residues predominate over residues 923-936 (RQSGPTKAPVQTQA). Composition is skewed to basic and acidic residues over residues 954–973 (PEVR…EQHK), 1004–1013 (ENAKPNRDLK), and 1026–1037 (DLASHPEQELAP).

The protein belongs to the amino acid/polyamine transporter 2 family. Expressed in neurons, astrocytes and epithelial cells scattered throughout the central nervous system structures including striatum, ependyma, cerebral cortex, hippocampus, hypothalamus, thalamus, pons, and cerebellum (at protein level). Highly expressed in paraventricular hypothalamic nucleus, suprachiasmatic nucleus, anterior hypothalamic area central part, in lateral ventricule and in dorsal 3rd ventricule (at protein level). Expressed in choroid plexus epithelial cells (at protein level).

It is found in the membrane. The enzyme catalyses L-glutamate(out) = L-glutamate(in). It catalyses the reaction L-glutamine(out) = L-glutamine(in). It carries out the reaction L-alanine(in) = L-alanine(out). The catalysed reaction is L-serine(in) = L-serine(out). The enzyme catalyses L-leucine(in) = L-leucine(out). Functionally, facilitates bidirectional transport of amino acids. May act as a glutamate sensor that regulates glutamate-glutamine cycle and mTOR signaling in the brain. The transport mechanism remains to be elucidated. The protein is Solute carrier family 38 member 10 of Mus musculus (Mouse).